Here is a 183-residue protein sequence, read N- to C-terminus: Capsid protein (183 aa).

The tract at residues 136–183 (NAPILSTLPETTVVRRRGRSPRRRTPSPRRRRSESPRRRRSQSRESQC) is disordered. Residues 149–176 (VRRRGRSPRRRTPSPRRRRSESPRRRRS) are compositionally biased toward basic residues. Ser-155, Ser-162, and Ser-170 each carry phosphoserine; by host. The 1; half-length repeat unit spans residues 155–160 (SPRRRT). The interval 155 to 176 (SPRRRTPSPRRRRSESPRRRRS) is 3 X 7 AA repeats of S-P-R-R-R-[PR]-S. The Bipartite nuclear localization signal signature appears at 158 to 175 (RRTPSPRRRRSESPRRRR). 2 repeat units span residues 162–168 (SPRRRRS) and 170–176 (SPRRRRS). An RNA binding region spans residues 177-183 (QSRESQC).

Belongs to the orthohepadnavirus core antigen family. Homodimerizes, then multimerizes. Interacts with cytosol exposed regions of viral L glycoprotein present in the reticulum-to-Golgi compartment. Interacts with human FLNB. Phosphorylated form interacts with host importin alpha; this interaction depends on the exposure of the NLS, which itself depends upon genome maturation and/or phosphorylation of the capsid protein. Interacts with host NUP153. In terms of processing, phosphorylated by host SRPK1, SRPK2, and maybe protein kinase C or GAPDH. Phosphorylation is critical for pregenomic RNA packaging. Protein kinase C phosphorylation is stimulated by HBx protein and may play a role in transport of the viral genome to the nucleus at the late step during the viral replication cycle.

It localises to the virion. The protein localises to the host cytoplasm. Its function is as follows. Self assembles to form an icosahedral capsid. Most capsids appear to be large particles with an icosahedral symmetry of T=4 and consist of 240 copies of capsid protein, though a fraction forms smaller T=3 particles consisting of 180 capsid proteins. Entering capsids are transported along microtubules to the nucleus. Phosphorylation of the capsid is thought to induce exposure of nuclear localization signal in the C-terminal portion of the capsid protein that allows binding to the nuclear pore complex via the importin (karyopherin-) alpha and beta. Capsids are imported in intact form through the nuclear pore into the nuclear basket, where it probably binds NUP153. Only capsids that contain the mature viral genome can release the viral DNA and capsid protein into the nucleoplasm. Immature capsids get stuck in the basket. Capsids encapsulate the pre-genomic RNA and the P protein. Pre-genomic RNA is reverse-transcribed into DNA while the capsid is still in the cytoplasm. The capsid can then either be directed to the nucleus, providing more genomes for transcription, or bud through the endoplasmic reticulum to provide new virions. This Homo sapiens (Human) protein is Capsid protein.